Here is a 234-residue protein sequence, read N- to C-terminus: Lipoprotein-releasing system ATP-binding protein LolD (234 aa).

Positions 7–233 (LQCINLCKRY…LQHHLTLVGA (227 aa)) constitute an ABC transporter domain. 43-50 (GSSGSGKS) is an ATP binding site.

Belongs to the ABC transporter superfamily. Lipoprotein translocase (TC 3.A.1.125) family. In terms of assembly, the complex is composed of two ATP-binding proteins (LolD) and two transmembrane proteins (LolC and LolE).

The protein localises to the cell inner membrane. In terms of biological role, part of the ABC transporter complex LolCDE involved in the translocation of mature outer membrane-directed lipoproteins, from the inner membrane to the periplasmic chaperone, LolA. Responsible for the formation of the LolA-lipoprotein complex in an ATP-dependent manner. The polypeptide is Lipoprotein-releasing system ATP-binding protein LolD (Yersinia pestis bv. Antiqua (strain Antiqua)).